Consider the following 130-residue polypeptide: Small ribosomal subunit protein uS9 (130 aa).

It belongs to the universal ribosomal protein uS9 family.

The sequence is that of Small ribosomal subunit protein uS9 from Polaromonas naphthalenivorans (strain CJ2).